Consider the following 135-residue polypeptide: Large ribosomal subunit protein mL41A (135 aa).

The N-terminal 13 residues, 1-13, are a transit peptide targeting the mitochondrion; that stretch reads MGLISKIARGLVR.

Belongs to the mitochondrion-specific ribosomal protein mL41 family. As to quaternary structure, component of the mitochondrial ribosome large subunit (39S) which comprises a 16S rRNA and about 50 distinct proteins.

Its subcellular location is the mitochondrion. Component of the mitochondrial ribosome large subunit. Also involved in apoptosis and cell cycle. The sequence is that of Large ribosomal subunit protein mL41A (mrpl41-a) from Xenopus laevis (African clawed frog).